The primary structure comprises 136 residues: Small ribosomal subunit protein uS12 (136 aa).

The tract at residues 1–28 (MPTIQQLIRSERQELKKKTKSPALKSCP) is disordered. Aspartate 89 carries the post-translational modification 3-methylthioaspartic acid. The tract at residues 101–136 (TLDTAGVKDRKQGRSKYGAKRPKPGAASTASTGKKR) is disordered. Residues 113–123 (GRSKYGAKRPK) show a composition bias toward basic residues.

It belongs to the universal ribosomal protein uS12 family. In terms of assembly, part of the 30S ribosomal subunit. Contacts proteins S8 and S17. May interact with IF1 in the 30S initiation complex.

Functionally, with S4 and S5 plays an important role in translational accuracy. Its function is as follows. Interacts with and stabilizes bases of the 16S rRNA that are involved in tRNA selection in the A site and with the mRNA backbone. Located at the interface of the 30S and 50S subunits, it traverses the body of the 30S subunit contacting proteins on the other side and probably holding the rRNA structure together. The combined cluster of proteins S8, S12 and S17 appears to hold together the shoulder and platform of the 30S subunit. The protein is Small ribosomal subunit protein uS12 of Cyanothece sp. (strain PCC 7425 / ATCC 29141).